The primary structure comprises 164 residues: Ribonuclease H (164 aa).

Residues 9 to 150 enclose the RNase H type-1 domain; that stretch reads DMPRVTIYTD…ADTLANAATD (142 aa). 4 residues coordinate Mg(2+): Asp-18, Glu-56, Asp-78, and Asp-142.

This sequence belongs to the RNase H family. In terms of assembly, monomer. It depends on Mg(2+) as a cofactor.

The protein resides in the cytoplasm. The enzyme catalyses Endonucleolytic cleavage to 5'-phosphomonoester.. Functionally, endonuclease that specifically degrades the RNA of RNA-DNA hybrids. The sequence is that of Ribonuclease H from Chromohalobacter salexigens (strain ATCC BAA-138 / DSM 3043 / CIP 106854 / NCIMB 13768 / 1H11).